We begin with the raw amino-acid sequence, 81 residues long: Photosystem I iron-sulfur center (81 aa).

2 consecutive 4Fe-4S ferredoxin-type domains span residues 2 to 31 and 39 to 68; these read SHSVKIYDTCIGCTQCVRACPTDVLEMIPW and IASAPRTEDCVGCKRCESACPTDFLSVRVY. The [4Fe-4S] cluster site is built by cysteine 11, cysteine 14, cysteine 17, cysteine 21, cysteine 48, cysteine 51, cysteine 54, and cysteine 58.

As to quaternary structure, the eukaryotic PSI reaction center is composed of at least 11 subunits. It depends on [4Fe-4S] cluster as a cofactor.

It localises to the plastid. It is found in the chloroplast thylakoid membrane. The catalysed reaction is reduced [plastocyanin] + hnu + oxidized [2Fe-2S]-[ferredoxin] = oxidized [plastocyanin] + reduced [2Fe-2S]-[ferredoxin]. In terms of biological role, apoprotein for the two 4Fe-4S centers FA and FB of photosystem I (PSI); essential for photochemical activity. FB is the terminal electron acceptor of PSI, donating electrons to ferredoxin. The C-terminus interacts with PsaA/B/D and helps assemble the protein into the PSI complex. Required for binding of PsaD and PsaE to PSI. PSI is a plastocyanin-ferredoxin oxidoreductase, converting photonic excitation into a charge separation, which transfers an electron from the donor P700 chlorophyll pair to the spectroscopically characterized acceptors A0, A1, FX, FA and FB in turn. The sequence is that of Photosystem I iron-sulfur center from Acorus calamus (Sweet flag).